We begin with the raw amino-acid sequence, 476 residues long: 1-aminocyclopropane-1-carboxylate synthase 4 (476 aa).

Lys-282 carries the post-translational modification N6-(pyridoxal phosphate)lysine.

It belongs to the class-I pyridoxal-phosphate-dependent aminotransferase family. Homodimer. It depends on pyridoxal 5'-phosphate as a cofactor.

The enzyme catalyses S-adenosyl-L-methionine = 1-aminocyclopropane-1-carboxylate + S-methyl-5'-thioadenosine + H(+). The protein operates within alkene biosynthesis; ethylene biosynthesis via S-adenosyl-L-methionine; ethylene from S-adenosyl-L-methionine: step 1/2. Catalyzes the formation of 1-aminocyclopropane-1-carboxylate, a direct precursor of ethylene in higher plants. The polypeptide is 1-aminocyclopropane-1-carboxylate synthase 4 (ACS4) (Solanum lycopersicum (Tomato)).